The primary structure comprises 591 residues: Aspartate--tRNA(Asp/Asn) ligase (591 aa).

Position 175 (Glu-175) interacts with L-aspartate. The tract at residues Gln-199–Lys-202 is aspartate. Arg-221 and His-453 together coordinate L-aspartate. Arg-221–Glu-223 lines the ATP pocket. Glu-486 lines the ATP pocket. Arg-493 serves as a coordination point for L-aspartate. Position 538 to 541 (Gly-538 to Arg-541) interacts with ATP.

This sequence belongs to the class-II aminoacyl-tRNA synthetase family. Type 1 subfamily. In terms of assembly, homodimer.

It localises to the cytoplasm. It catalyses the reaction tRNA(Asx) + L-aspartate + ATP = L-aspartyl-tRNA(Asx) + AMP + diphosphate. Aspartyl-tRNA synthetase with relaxed tRNA specificity since it is able to aspartylate not only its cognate tRNA(Asp) but also tRNA(Asn). Reaction proceeds in two steps: L-aspartate is first activated by ATP to form Asp-AMP and then transferred to the acceptor end of tRNA(Asp/Asn). The sequence is that of Aspartate--tRNA(Asp/Asn) ligase from Jannaschia sp. (strain CCS1).